We begin with the raw amino-acid sequence, 330 residues long: MPLLDIRNLTIEFKTGDEWVKAVDRVSMTLTEGEIRGLVGESGSGKSLIAKAICGVNKDNWRVTADRMRFDDIDLLRLSARERRKLVGHNVSMIFQEPQSCLDPSERVGRQLMQNIPAWTYKGRWWQRFGWRKRRAIELLHRVGIKDHKDAMRSFPYELTEGECQKVMIAIALANQPRLLIADEPTNSMEPTTQAQIFRLLTRLNQNSNTTILLISHDLQMLSQWADKINVLYCGQTVETAPSKELVTMPHHPYTQALIRAIPDFGSAMPHKSRLNTLPGAIPLLEQLPIGCRLGPRCPYAQRECIVTPRLTGAKNHLYACHFPLNMEKE.

Positions 6-259 (IRNLTIEFKT…PHHPYTQALI (254 aa)) constitute an ABC transporter domain. 40 to 47 (GESGSGKS) lines the ATP pocket.

This sequence belongs to the ABC transporter superfamily.

The protein resides in the cell inner membrane. In terms of biological role, involved in a peptide intake transport system that plays a role in the resistance to antimicrobial peptides. The protein is Peptide transport system ATP-binding protein SapD (sapD) of Escherichia coli O157:H7.